The chain runs to 1015 residues: PHD finger protein 20-like protein 1 (1015 aa).

A Tudor 1 domain is found at 11 to 71 (ITFEIGARLE…SNRLRPLERP (61 aa)). Residues Lys-75 and Lys-79 each participate in a glycyl lysine isopeptide (Lys-Gly) (interchain with G-Cter in SUMO2) cross-link. Residues 85-141 (FDFKAGEEVLARWTDCRYYPAKIEAINKEGTFTVQFYDGVIRCLKRMHIKAMPEDAK) form the Tudor 2 domain. Disordered stretches follow at residues 183–206 (AKNKTGSKPRTSANSNKEKERDGG) and 309–367 (EQAI…KAPK). Polar residues-rich tracts occupy residues 186–197 (KTGSKPRTSANS) and 315–346 (KPQSQKKNEAVISSSANTQKPALLSSTLSSGK). At Ser-368 the chain carries Phosphoserine. 2 disordered regions span residues 389–455 (VINK…SSVP) and 478–513 (CGSEVTGSQAPDSSYPGGECPREEKEETPLFANPTS). Basic residues predominate over residues 404-415 (PCKHSERRRRSQ). Position 432 is a phosphoserine (Ser-432). 2 stretches are compositionally biased toward polar residues: residues 443–453 (SISSQNQQESS) and 480–489 (SEVTGSQAPD). Lys-530 is covalently cross-linked (Glycyl lysine isopeptide (Lys-Gly) (interchain with G-Cter in SUMO2)). Residues 539–565 (EKTSTAFGKRKEKDKERKEKRDKDHYK) show a composition bias toward basic and acidic residues. Residues 539-585 (EKTSTAFGKRKEKDKERKEKRDKDHYKPKQKKKKKKKKKSKQHDYSD) are disordered. Over residues 566-579 (PKQKKKKKKKKKSK) the composition is skewed to basic residues. A PHD-type zinc finger spans residues 681 to 729 (IVRCICELDEENGFMIQCEECLCWQHSVCMGLLEDSIPEQYICYICRDP). Residue Lys-849 forms a Glycyl lysine isopeptide (Lys-Gly) (interchain with G-Cter in SUMO2) linkage. Over residues 859 to 878 (HSYQKPQSFSQDCHSLTDPG) the composition is skewed to polar residues. The tract at residues 859-889 (HSYQKPQSFSQDCHSLTDPGSSDDDDVSSFE) is disordered. A compositionally biased stretch (acidic residues) spans 879 to 889 (SSDDDDVSSFE). Lys-907 is subject to N6-acetyllysine.

Interacts with methylated DNMT1 (DNMT1K142me1). Interacts with SOX2.

The protein resides in the nucleus. Is a negative regulator of proteasomal degradation of a set of methylated proteins, including DNMT1 and SOX2. Involved in the maintainance of embryonic stem cells pluripotency, through the regulation of SOX2 levels. This chain is PHD finger protein 20-like protein 1 (Phf20l1), found in Rattus norvegicus (Rat).